The following is a 260-amino-acid chain: MAEQEQGTGIRVEALAPEFQAQAQAWAQRLGLPMTDDEAGFAVQVGVDGLQVQQLGPQAPGPVRVDFVEGQAAHRRLYGGGSGQMIAKAVGIAQGVRPQVLDATAGLGKDAFVLASLGCQMTLIERQPLIAALLEDGLARARGDLEVGGIVERMRLLTGNAIERMRAWEGEAPQVIYLDPMFPHRDKSALVKKEMRVFRPLVGDDLDAPALLEAALALASHRVVVKRPRKAPIIEGVKPSHSLEGKSSRYDIYPKKALKG.

Residues 125-126 (ER) and Asp179 contribute to the S-adenosyl-L-methionine site.

The protein belongs to the methyltransferase superfamily. RsmJ family.

It is found in the cytoplasm. It carries out the reaction guanosine(1516) in 16S rRNA + S-adenosyl-L-methionine = N(2)-methylguanosine(1516) in 16S rRNA + S-adenosyl-L-homocysteine + H(+). Specifically methylates the guanosine in position 1516 of 16S rRNA. This is Ribosomal RNA small subunit methyltransferase J from Pseudomonas entomophila (strain L48).